Reading from the N-terminus, the 189-residue chain is Crossover junction endodeoxyribonuclease RuvC (189 aa).

Residues D7, E68, and D141 contribute to the active site. Residues D7, E68, and D141 each coordinate Mg(2+).

Belongs to the RuvC family. As to quaternary structure, homodimer which binds Holliday junction (HJ) DNA. The HJ becomes 2-fold symmetrical on binding to RuvC with unstacked arms; it has a different conformation from HJ DNA in complex with RuvA. In the full resolvosome a probable DNA-RuvA(4)-RuvB(12)-RuvC(2) complex forms which resolves the HJ. The cofactor is Mg(2+).

It is found in the cytoplasm. The catalysed reaction is Endonucleolytic cleavage at a junction such as a reciprocal single-stranded crossover between two homologous DNA duplexes (Holliday junction).. Functionally, the RuvA-RuvB-RuvC complex processes Holliday junction (HJ) DNA during genetic recombination and DNA repair. Endonuclease that resolves HJ intermediates. Cleaves cruciform DNA by making single-stranded nicks across the HJ at symmetrical positions within the homologous arms, yielding a 5'-phosphate and a 3'-hydroxyl group; requires a central core of homology in the junction. The consensus cleavage sequence is 5'-(A/T)TT(C/G)-3'. Cleavage occurs on the 3'-side of the TT dinucleotide at the point of strand exchange. HJ branch migration catalyzed by RuvA-RuvB allows RuvC to scan DNA until it finds its consensus sequence, where it cleaves and resolves the cruciform DNA. The protein is Crossover junction endodeoxyribonuclease RuvC of Chlorobium phaeovibrioides (strain DSM 265 / 1930) (Prosthecochloris vibrioformis (strain DSM 265)).